Consider the following 169-residue polypeptide: Der GTPase-activating protein YihI (169 aa).

Disordered stretches follow at residues 1–99 (MKPS…QAEL) and 146–169 (SYDD…LRGN). A compositionally biased stretch (basic residues) spans 10–19 (SKGHAKARRK). The span at 20-30 (TREELDQEARD) shows a compositional bias: basic and acidic residues. Basic residues predominate over residues 31-40 (RKRQKKRRGH). Positions 49–58 (GNTTSGSKGQ) are enriched in polar residues. The segment covering 147 to 159 (YDDDEEEEEDEKQ) has biased composition (acidic residues). Over residues 160 to 169 (EDMMRLLRGN) the composition is skewed to basic and acidic residues.

This sequence belongs to the YihI family. Interacts with Der.

Its function is as follows. A GTPase-activating protein (GAP) that modifies Der/EngA GTPase function. May play a role in ribosome biogenesis. The sequence is that of Der GTPase-activating protein YihI from Escherichia coli O45:K1 (strain S88 / ExPEC).